The following is a 315-amino-acid chain: Methionyl-tRNA formyltransferase (315 aa).

Residue 107-110 (SLLP) participates in (6S)-5,6,7,8-tetrahydrofolate binding.

The protein belongs to the Fmt family.

The catalysed reaction is L-methionyl-tRNA(fMet) + (6R)-10-formyltetrahydrofolate = N-formyl-L-methionyl-tRNA(fMet) + (6S)-5,6,7,8-tetrahydrofolate + H(+). Attaches a formyl group to the free amino group of methionyl-tRNA(fMet). The formyl group appears to play a dual role in the initiator identity of N-formylmethionyl-tRNA by promoting its recognition by IF2 and preventing the misappropriation of this tRNA by the elongation apparatus. This is Methionyl-tRNA formyltransferase from Borreliella afzelii (strain PKo) (Borrelia afzelii).